Here is a 95-residue protein sequence, read N- to C-terminus: Aspartyl/glutamyl-tRNA(Asn/Gln) amidotransferase subunit C (95 aa).

The interval 51 to 95 (PTSHATLTSSRLREDVTRPSLPPEKSLANAPAKSDTSFAVPKIIE) is disordered.

The protein belongs to the GatC family. As to quaternary structure, heterotrimer of A, B and C subunits.

It carries out the reaction L-glutamyl-tRNA(Gln) + L-glutamine + ATP + H2O = L-glutaminyl-tRNA(Gln) + L-glutamate + ADP + phosphate + H(+). It catalyses the reaction L-aspartyl-tRNA(Asn) + L-glutamine + ATP + H2O = L-asparaginyl-tRNA(Asn) + L-glutamate + ADP + phosphate + 2 H(+). Its function is as follows. Allows the formation of correctly charged Asn-tRNA(Asn) or Gln-tRNA(Gln) through the transamidation of misacylated Asp-tRNA(Asn) or Glu-tRNA(Gln) in organisms which lack either or both of asparaginyl-tRNA or glutaminyl-tRNA synthetases. The reaction takes place in the presence of glutamine and ATP through an activated phospho-Asp-tRNA(Asn) or phospho-Glu-tRNA(Gln). The protein is Aspartyl/glutamyl-tRNA(Asn/Gln) amidotransferase subunit C of Myxococcus xanthus (strain DK1622).